The following is a 516-amino-acid chain: Delta(24)-sterol reductase (516 aa).

An N-terminal signal peptide occupies residues 1-22 (MEPAVSLAVCALLFLLWVRLKG). Over 23–31 (LEFVLIHQR) the chain is Lumenal. Residues 32 to 52 (WVFVCLFLLPLSLIFDIYYYV) traverse the membrane as a helical segment. Topologically, residues 53-516 (RAWVVFKLSS…YDKICKAARH (464 aa)) are cytoplasmic. Residues 58–234 (FKLSSAPRLH…VAAEIRIIPA (177 aa)) form the FAD-binding PCMH-type domain. 163–175 (TVGGLIMGTGIES) is an FAD binding site.

Belongs to the FAD-binding oxidoreductase/transferase type 4 family. As to quaternary structure, interacts with DHCR7; this interaction regulates DHCR7 activity. The cofactor is FAD. In terms of tissue distribution, highly expressed in brain and adrenal gland with moderate expression in liver, lung, spleen, prostate and spinal cord. Low expression in heart, uterus and prostate. Undetectable in blood cells. In the brain, strongly expressed in cortical regions, substantia nigra, caudate nucleus, hippocampus, medulla oblongata and pons. In brains affected by Alzheimer disease, expression in the inferior temporal lobe is substantially lower than in the frontal cortex.

It is found in the endoplasmic reticulum membrane. Its subcellular location is the golgi apparatus membrane. It carries out the reaction cholesterol + NADP(+) = desmosterol + NADPH + H(+). It catalyses the reaction lanosterol + NADPH + H(+) = 24,25-dihydrolanosterol + NADP(+). The catalysed reaction is 5alpha-cholest-8-en-3beta-ol + NADP(+) = zymosterol + NADPH + H(+). It participates in steroid biosynthesis; cholesterol biosynthesis. In terms of biological role, catalyzes the reduction of the delta-24 double bond of sterol intermediates during cholesterol biosynthesis. In addition to its cholesterol-synthesizing activity, can protect cells from oxidative stress by reducing caspase 3 activity during apoptosis induced by oxidative stress. Also protects against amyloid-beta peptide-induced apoptosis. The protein is Delta(24)-sterol reductase (DHCR24) of Homo sapiens (Human).